The chain runs to 321 residues: D-alanine--D-alanine ligase (321 aa).

An ATP-grasp domain is found at Arg-121–Lys-315. Met-148–Gln-199 is an ATP binding site. Mg(2+) is bound by residues Glu-268, Glu-282, and Asn-284.

Belongs to the D-alanine--D-alanine ligase family. Requires Mg(2+) as cofactor. Mn(2+) is required as a cofactor.

It localises to the cytoplasm. It catalyses the reaction 2 D-alanine + ATP = D-alanyl-D-alanine + ADP + phosphate + H(+). It participates in cell wall biogenesis; peptidoglycan biosynthesis. Cell wall formation. This chain is D-alanine--D-alanine ligase, found in Rickettsia typhi (strain ATCC VR-144 / Wilmington).